The sequence spans 312 residues: tRNA pseudouridine synthase B (312 aa).

Asp37 functions as the Nucleophile in the catalytic mechanism.

Belongs to the pseudouridine synthase TruB family. Type 1 subfamily.

The catalysed reaction is uridine(55) in tRNA = pseudouridine(55) in tRNA. Its function is as follows. Responsible for synthesis of pseudouridine from uracil-55 in the psi GC loop of transfer RNAs. This is tRNA pseudouridine synthase B from Thermus thermophilus (strain ATCC BAA-163 / DSM 7039 / HB27).